Here is a 280-residue protein sequence, read N- to C-terminus: Probable endonuclease 4 (280 aa).

His-69, His-109, Glu-145, Asp-179, His-182, His-216, Asp-229, His-231, and Glu-261 together coordinate Zn(2+).

It belongs to the AP endonuclease 2 family. Zn(2+) is required as a cofactor.

It catalyses the reaction Endonucleolytic cleavage to 5'-phosphooligonucleotide end-products.. Its function is as follows. Endonuclease IV plays a role in DNA repair. It cleaves phosphodiester bonds at apurinic or apyrimidinic (AP) sites, generating a 3'-hydroxyl group and a 5'-terminal sugar phosphate. This Actinobacillus pleuropneumoniae serotype 7 (strain AP76) protein is Probable endonuclease 4.